The primary structure comprises 416 residues: Glutamyl-tRNA reductase (416 aa).

Substrate-binding positions include 49 to 52, Ser-105, 110 to 112, and Gln-116; these read TCNR and EPQ. Catalysis depends on Cys-50, which acts as the Nucleophile. Position 185 to 190 (185 to 190) interacts with NADP(+); it reads GAGETI.

The protein belongs to the glutamyl-tRNA reductase family. Homodimer.

The enzyme catalyses (S)-4-amino-5-oxopentanoate + tRNA(Glu) + NADP(+) = L-glutamyl-tRNA(Glu) + NADPH + H(+). The protein operates within porphyrin-containing compound metabolism; protoporphyrin-IX biosynthesis; 5-aminolevulinate from L-glutamyl-tRNA(Glu): step 1/2. Catalyzes the NADPH-dependent reduction of glutamyl-tRNA(Glu) to glutamate 1-semialdehyde (GSA). The protein is Glutamyl-tRNA reductase of Shewanella halifaxensis (strain HAW-EB4).